The sequence spans 224 residues: MKPAWALLRLASPQLPIGGYSYSQGLEWAIDSGLIQDADAAERWLADQLTLNLARFEAPLLLAHCRAAHEGNWPHLQELAERHRASRETRELALESRQMGYSLRQLLEGLPELDEAARELLASHHEPGLALAWALAARAWQITPDDALAAWLWGWLENQLAVLMKVLPLGQQAAQRLTSRLLPTLEAAQQQAASLSPEHWGSAAFGLALASMAHERQYSRLFRS.

It belongs to the UreF family. In terms of assembly, ureD, UreF and UreG form a complex that acts as a GTP-hydrolysis-dependent molecular chaperone, activating the urease apoprotein by helping to assemble the nickel containing metallocenter of UreC. The UreE protein probably delivers the nickel.

It localises to the cytoplasm. Required for maturation of urease via the functional incorporation of the urease nickel metallocenter. The chain is Urease accessory protein UreF from Ectopseudomonas mendocina (strain ymp) (Pseudomonas mendocina).